The primary structure comprises 265 residues: Hydroxyethylthiazole kinase 2 (265 aa).

Methionine 39 contributes to the substrate binding site. Lysine 115 and threonine 168 together coordinate ATP. Residue glycine 195 coordinates substrate.

The protein belongs to the Thz kinase family. It depends on Mg(2+) as a cofactor.

The enzyme catalyses 5-(2-hydroxyethyl)-4-methylthiazole + ATP = 4-methyl-5-(2-phosphooxyethyl)-thiazole + ADP + H(+). The protein operates within cofactor biosynthesis; thiamine diphosphate biosynthesis; 4-methyl-5-(2-phosphoethyl)-thiazole from 5-(2-hydroxyethyl)-4-methylthiazole: step 1/1. In terms of biological role, catalyzes the phosphorylation of the hydroxyl group of 4-methyl-5-beta-hydroxyethylthiazole (THZ). The polypeptide is Hydroxyethylthiazole kinase 2 (Clostridium botulinum (strain Langeland / NCTC 10281 / Type F)).